The chain runs to 339 residues: Ferredoxin--NADP reductase (339 aa).

Positions 36, 44, 49, 89, 123, 290, and 331 each coordinate FAD.

Belongs to the ferredoxin--NADP reductase type 2 family. In terms of assembly, homodimer. The cofactor is FAD.

It carries out the reaction 2 reduced [2Fe-2S]-[ferredoxin] + NADP(+) + H(+) = 2 oxidized [2Fe-2S]-[ferredoxin] + NADPH. The sequence is that of Ferredoxin--NADP reductase from Acidiphilium cryptum (strain JF-5).